A 226-amino-acid polypeptide reads, in one-letter code: ATP synthase subunit a (226 aa).

Transmembrane regions (helical) follow at residues 18–38 (FIIG…ARYA), 44–64 (VVPS…ISFA), 79–99 (LAAT…IPGF), 105–125 (SWSF…FEGI), 137–157 (FMGP…ISHF), 177–197 (FLLV…FAIL), and 202–222 (LLQA…AVVV).

This sequence belongs to the ATPase A chain family. In terms of assembly, F-type ATPases have 2 components, CF(1) - the catalytic core - and CF(0) - the membrane proton channel. CF(1) has five subunits: alpha(3), beta(3), gamma(1), delta(1), epsilon(1). CF(0) has three main subunits: a(1), b(2) and c(9-12). The alpha and beta chains form an alternating ring which encloses part of the gamma chain. CF(1) is attached to CF(0) by a central stalk formed by the gamma and epsilon chains, while a peripheral stalk is formed by the delta and b chains.

The protein localises to the cell inner membrane. In terms of biological role, key component of the proton channel; it plays a direct role in the translocation of protons across the membrane. This Helicobacter hepaticus (strain ATCC 51449 / 3B1) protein is ATP synthase subunit a.